The chain runs to 281 residues: Pantothenate synthetase (281 aa).

Residue 30–37 (MGNLHQGH) participates in ATP binding. Histidine 37 functions as the Proton donor in the catalytic mechanism. Glutamine 61 is a binding site for (R)-pantoate. Residue glutamine 61 participates in beta-alanine binding. 148–151 (GQKD) lines the ATP pocket. Glutamine 154 is a binding site for (R)-pantoate. Residues alanine 177 and 185-188 (LSSR) each bind ATP.

It belongs to the pantothenate synthetase family. As to quaternary structure, homodimer.

It localises to the cytoplasm. It catalyses the reaction (R)-pantoate + beta-alanine + ATP = (R)-pantothenate + AMP + diphosphate + H(+). It participates in cofactor biosynthesis; (R)-pantothenate biosynthesis; (R)-pantothenate from (R)-pantoate and beta-alanine: step 1/1. Catalyzes the condensation of pantoate with beta-alanine in an ATP-dependent reaction via a pantoyl-adenylate intermediate. This chain is Pantothenate synthetase, found in Acinetobacter baylyi (strain ATCC 33305 / BD413 / ADP1).